Consider the following 497-residue polypeptide: MANDKGDISKDGVSRRKFLGGAVIGAAAAAGVGSQILSLSATAQGADKERVGPLQSNVDYDAVVIGGGFAGVTAARELSRSGLKTLVLEGRSRLGGRTFTSKLDGEKVELGGTWVHWTQPNVWTEVMHYGLEIEETVGLASPETVIWVTDNQVKRAPAAEAFEIFGAACTEYYKEAHNIYPRPFDPFFAKKALQEMDGLSASEYLNKLSLTREQKDMMDSWLSGNGHNYPETIAYSEIMRWFALSNFNMPTMFDSIARYKIKSGTVSLLEAMVAESDMEVQLSTPVLKVKQDSHRVLITTEEGTIAASAVVMAVPLNTMGDVEYSPRLSDAKSEIASQGHAGKGVKGYIRIKQDVGNVMTYAPARNDVTPFTSVFTDHVGENGTLLIAFSADPKLVDINDSKAVEKALHPLLPGVEVTSSYGYDWNLDPFSKGTWCTYRPGQTTRYLTELQKREGRLFFAGSDMANGWRGFIDGAIESGREVGYQVASYLKGKNSNA.

Residues 1-43 (MANDKGDISKDGVSRRKFLGGAVIGAAAAAGVGSQILSLSATA) constitute a signal peptide (tat-type signal). 7 residues coordinate FAD: alanine 70, glutamate 89, arginine 97, tryptophan 114, valine 286, serine 462, and isoleucine 472.

It belongs to the flavin monoamine oxidase family. In terms of assembly, homodimer. The cofactor is FAD. Post-translationally, predicted to be exported by the Tat system. The position of the signal peptide cleavage has not been experimentally proven.

The protein localises to the periplasm. It carries out the reaction pseudooxynicotine + 2 Fe(III)-[cytochrome c] + H2O = 4-oxo-4-(pyridin-3-yl)butanal + methylamine + 2 Fe(II)-[cytochrome c] + 2 H(+). The protein operates within alkaloid degradation; nicotine degradation. Its activity is regulated as follows. Strongly inhibited by Ag(+), Co(2+), Cu(2+) and Hg(2+). In terms of biological role, involved in nicotine degradation. Catalyzes the deamination of pseudooxynicotine to 3-succinoylsemialdehyde-pyridine. The polypeptide is Pseudooxynicotine dehydrogenase (Pseudomonas sp).